We begin with the raw amino-acid sequence, 383 residues long: Putative F-box protein At1g77650 (383 aa).

Residues 1 to 47 (MAFLSLPSDVVEEFLFKTPIESLVLCKPTCKQLYALCNDKRFIYNHL) form the F-box domain.

The polypeptide is Putative F-box protein At1g77650 (Arabidopsis thaliana (Mouse-ear cress)).